The chain runs to 97 residues: Large ribosomal subunit protein bL28 (97 aa).

Belongs to the bacterial ribosomal protein bL28 family.

This Nitrobacter winogradskyi (strain ATCC 25391 / DSM 10237 / CIP 104748 / NCIMB 11846 / Nb-255) protein is Large ribosomal subunit protein bL28.